Consider the following 164-residue polypeptide: Ribonuclease P protein component 2 (164 aa).

Belongs to the eukaryotic/archaeal RNase P protein component 2 family. As to quaternary structure, consists of a catalytic RNA component and at least 4-5 protein subunits.

The protein localises to the cytoplasm. The catalysed reaction is Endonucleolytic cleavage of RNA, removing 5'-extranucleotides from tRNA precursor.. In terms of biological role, part of ribonuclease P, a protein complex that generates mature tRNA molecules by cleaving their 5'-ends. The polypeptide is Ribonuclease P protein component 2 (Halobacterium salinarum (strain ATCC 29341 / DSM 671 / R1)).